We begin with the raw amino-acid sequence, 839 residues long: Autophagy-related protein 9A (839 aa).

Residue alanine 2 is modified to N-acetylalanine. The Cytoplasmic portion of the chain corresponds to 2-61; sequence AQFDTEYQRLEASYSDSPPGEEDLLVHVAEGSKSPWHHIENLDLFFSRVYNLHQKNGFTC. The Tyrosine-based sorting signal signature appears at 8-11; sequence YQRL. Residues serine 14, serine 16, and serine 18 each carry the phosphoserine modification. The chain crosses the membrane as a helical span at residues 62 to 84; it reads MLIGEIFELMQFLFVVAFTTFLV. The Lumenal segment spans residues 85–128; sequence SCVDYDILFANKMVNHSLHPTEPVKVTLPDAFLPAQVCSARIQE. Asparagine 99 carries N-linked (GlcNAc...) asparagine glycosylation. The chain crosses the membrane as a helical span at residues 129–154; sequence NGSLITILVIAGVFWIHRLIKFIYNI. Residues 155–290 lie on the Cytoplasmic side of the membrane; that stretch reads CCYWEIHSFY…ELAQRLSNRI (136 aa). An intramembrane segment occupies 291–301; that stretch reads LWIGIANFLLC. The Cytoplasmic portion of the chain corresponds to 302–319; that stretch reads PLILIWQILYAFFSYAEV. An intramembrane segment occupies 320–328; the sequence is LKREPGALG. The Cytoplasmic portion of the chain corresponds to 329–371; sequence ARCWSLYGRCYLRHFNELEHELQSRLNRGYKPASKYMNCFLSP. The chain crosses the membrane as a helical span at residues 372-397; the sequence is LLTLLAKNGAFFAGSILAVLIALTIY. The Lumenal segment spans residues 398–406; the sequence is DEDVLAVEH. The helical transmembrane segment at 407–424 threads the bilayer; it reads VLTTVTLLGVTVTVCRSF. Over 425–470 the chain is Cytoplasmic; sequence IPDQHMVFCPEQLLRVILAHIHYMPDHWQGNAHRSQTRDEFAQLFQ. An intramembrane segment occupies 471–480; that stretch reads YKAVFILEEL. Topologically, residues 481–483 are cytoplasmic; that stretch reads LSP. The stretch at 484–492 is an intramembrane region; sequence IVTPLILIF. Residues 493 to 839 lie on the Cytoplasmic side of the membrane; it reads CLRPRALEII…DELPPQVHKV (347 aa). Serine 656, serine 735, serine 738, serine 741, and serine 828 each carry phosphoserine. Disordered stretches follow at residues 656–689 and 717–839; these read SPLQPGQAPQGRVPSTMTGSGVDARTASSGSSVW and HKQQ…VHKV. Residues 724–736 are compositionally biased toward basic and acidic residues; the sequence is EPERHVWHRRESD. 2 stretches are compositionally biased toward acidic residues: residues 737 to 747 and 823 to 832; these read ESGESAPEEGG and VPEEGSEDEL.

This sequence belongs to the ATG9 family. In terms of assembly, homotrimer; forms a homotrimer with a central pore that forms a path between the two membrane leaflets. Interacts (via cytoplasmic its C-terminus) with ATG2A. Interacts with SUPT20H. Interacts (via the tyrosine-based sorting signal motif) with AP4M1; promoting association with the AP-4 complex. Interacts with ARFIP1 and ARFIP2. Interacts with PI4K2A and PI4KB. Interacts with ATG4A; the interaction is direct and promotes ATG9A trafficking. Ufmylated in a DDRGK1 dependent manner.

It localises to the preautophagosomal structure membrane. The protein resides in the cytoplasmic vesicle. The protein localises to the autophagosome membrane. It is found in the golgi apparatus. Its subcellular location is the trans-Golgi network membrane. It localises to the late endosome membrane. The protein resides in the recycling endosome membrane. The protein localises to the endoplasmic reticulum membrane. It is found in the mitochondrion membrane. It catalyses the reaction a 1,2-diacyl-sn-glycero-3-phosphocholine(in) = a 1,2-diacyl-sn-glycero-3-phosphocholine(out). The enzyme catalyses a 1,2-diacyl-sn-glycero-3-phospho-L-serine(in) = a 1,2-diacyl-sn-glycero-3-phospho-L-serine(out). The catalysed reaction is a 1,2-diacyl-sn-glycero-3-phosphoethanolamine(in) = a 1,2-diacyl-sn-glycero-3-phosphoethanolamine(out). Its function is as follows. Phospholipid scramblase involved in autophagy by mediating autophagosomal membrane expansion. Cycles between the preautophagosomal structure/phagophore assembly site (PAS) and the cytoplasmic vesicle pool and supplies membrane for the growing autophagosome. Lipid scramblase activity plays a key role in preautophagosomal structure/phagophore assembly by distributing the phospholipids that arrive through ATG2 (ATG2A or ATG2B) from the cytoplasmic to the luminal leaflet of the bilayer, thereby driving autophagosomal membrane expansion. Also required to supply phosphatidylinositol 4-phosphate to the autophagosome initiation site by recruiting the phosphatidylinositol 4-kinase beta (PI4KB) in a process dependent on ARFIP2, but not ARFIP1. In addition to autophagy, also plays a role in necrotic cell death. This is Autophagy-related protein 9A from Rattus norvegicus (Rat).